A 239-amino-acid polypeptide reads, in one-letter code: 1-(5-phosphoribosyl)-5-[(5-phosphoribosylamino)methylideneamino] imidazole-4-carboxamide isomerase (239 aa).

Asp-8 acts as the Proton acceptor in catalysis. Asp-129 functions as the Proton donor in the catalytic mechanism.

The protein belongs to the HisA/HisF family.

The protein resides in the cytoplasm. It catalyses the reaction 1-(5-phospho-beta-D-ribosyl)-5-[(5-phospho-beta-D-ribosylamino)methylideneamino]imidazole-4-carboxamide = 5-[(5-phospho-1-deoxy-D-ribulos-1-ylimino)methylamino]-1-(5-phospho-beta-D-ribosyl)imidazole-4-carboxamide. It functions in the pathway amino-acid biosynthesis; L-histidine biosynthesis; L-histidine from 5-phospho-alpha-D-ribose 1-diphosphate: step 4/9. The chain is 1-(5-phosphoribosyl)-5-[(5-phosphoribosylamino)methylideneamino] imidazole-4-carboxamide isomerase from Bacillus cereus (strain Q1).